Reading from the N-terminus, the 494-residue chain is Cobyric acid synthase (494 aa).

The GATase cobBQ-type domain maps to 248–444 (EIEIAIIKLP…LHGIFENDEW (197 aa)). C329 (nucleophile) is an active-site residue. H436 is an active-site residue.

It belongs to the CobB/CobQ family. CobQ subfamily.

The protein operates within cofactor biosynthesis; adenosylcobalamin biosynthesis. Catalyzes amidations at positions B, D, E, and G on adenosylcobyrinic A,C-diamide. NH(2) groups are provided by glutamine, and one molecule of ATP is hydrogenolyzed for each amidation. This is Cobyric acid synthase from Prochlorococcus marinus (strain NATL1A).